The chain runs to 60 residues: Large ribosomal subunit protein bL32 (60 aa).

Positions methionine 1 to threonine 36 are disordered. A compositionally biased stretch (basic residues) spans serine 9–histidine 19.

It belongs to the bacterial ribosomal protein bL32 family.

The chain is Large ribosomal subunit protein bL32 from Methylibium petroleiphilum (strain ATCC BAA-1232 / LMG 22953 / PM1).